The primary structure comprises 277 residues: Caspase-3 (277 aa).

Met1 carries the N-acetylmethionine modification. 2 consecutive propeptides follow at residues Met1–Asp9 and Ala10–Asp28. An N6-acetyllysine modification is found at Lys11. Ser26 is subject to Phosphoserine. Residues His121 and Cys163 contribute to the active site. Cys163 carries the post-translational modification S-nitrosocysteine; in inhibited form.

This sequence belongs to the peptidase C14A family. In terms of assembly, heterotetramer that consists of two anti-parallel arranged heterodimers, each one formed by a 17 kDa (p17) and a 12 kDa (p12) subunit. Interacts with BIRC6/bruce. Cleavage by granzyme B, caspase-6, caspase-8 and caspase-10 generates the two active subunits. Additional processing of the propeptides is likely due to the autocatalytic activity of the activated protease. Active heterodimers between the small subunit of caspase-7 protease and the large subunit of caspase-3 also occur and vice versa. In terms of processing, S-nitrosylated on its catalytic site cysteine in unstimulated cell lines and denitrosylated upon activation of the Fas apoptotic pathway, associated with an increase in intracellular caspase activity. Fas therefore activates caspase-3 not only by inducing the cleavage of the caspase zymogen to its active subunits, but also by stimulating the denitrosylation of its active site thiol. Post-translationally, ubiquitinated by BIRC6; this activity is inhibited by DIABLO/SMAC.

It localises to the cytoplasm. The enzyme catalyses Strict requirement for an Asp residue at positions P1 and P4. It has a preferred cleavage sequence of Asp-Xaa-Xaa-Asp-|- with a hydrophobic amino-acid residue at P2 and a hydrophilic amino-acid residue at P3, although Val or Ala are also accepted at this position.. Its activity is regulated as follows. Inhibited by BIRC6; following inhibition of BIRC6-caspase binding by DIABLO/SMAC, BIRC6 is subjected to caspase cleavage, leading to an increase in active caspases. Functionally, involved in the activation cascade of caspases responsible for apoptosis execution. At the onset of apoptosis, it proteolytically cleaves poly(ADP-ribose) polymerase PARP1 at a '216-Asp-|-Gly-217' bond. Cleaves and activates sterol regulatory element binding proteins (SREBPs) between the basic helix-loop-helix leucine zipper domain and the membrane attachment domain. Cleaves and activates caspase-6, -7 and -9 (CASP6, CASP7 and CASP9, respectively). Cleaves and inactivates interleukin-18 (IL18). Triggers cell adhesion in sympathetic neurons through RET cleavage. Cleaves IL-1 beta between an Asp and an Ala, releasing the mature cytokine which is involved in a variety of inflammatory processes. Cleaves and inhibits serine/threonine-protein kinase AKT1 in response to oxidative stress. Acts as an inhibitor of type I interferon production during virus-induced apoptosis by mediating cleavage of antiviral proteins CGAS, IRF3 and MAVS, thereby preventing cytokine overproduction. Also involved in pyroptosis by mediating cleavage and activation of gasdermin-E (GSDME). Cleaves XRCC4 and phospholipid scramblase proteins XKR4, XKR8 and XKR9, leading to promote phosphatidylserine exposure on apoptotic cell surface. Cleaves BIRC6 following inhibition of BIRC6-caspase binding by DIABLO/SMAC. The protein is Caspase-3 (CASP3) of Felis catus (Cat).